The chain runs to 487 residues: Chromosomal replication initiator protein DnaA (487 aa).

Residues 1 to 92 (MTIKGGVVSQ…SELWTANDAT (92 aa)) are domain I, interacts with DnaA modulators. Positions 92 to 144 (TGRRLDLKSRLEFESVGGAGYEAKAEPIEIVLPVSSDVPALAPTNGSKPSPVQ) are domain II. A domain III, AAA+ region region spans residues 145-367 (GLQERFTFDT…GALNTLSARA (223 aa)). Residues glycine 189, glycine 191, lysine 192, and threonine 193 each coordinate ATP. The segment at 368–487 (GEGVSRLTLE…LETITRKLRG (120 aa)) is domain IV, binds dsDNA.

The protein belongs to the DnaA family. Oligomerizes as a right-handed, spiral filament on DNA at oriC.

Its subcellular location is the cytoplasm. Functionally, plays an essential role in the initiation and regulation of chromosomal replication. ATP-DnaA binds to the origin of replication (oriC) to initiate formation of the DNA replication initiation complex once per cell cycle. Binds the DnaA box (a 9 base pair repeat at the origin) and separates the double-stranded (ds)DNA. Forms a right-handed helical filament on oriC DNA; dsDNA binds to the exterior of the filament while single-stranded (ss)DNA is stabiized in the filament's interior. The ATP-DnaA-oriC complex binds and stabilizes one strand of the AT-rich DNA unwinding element (DUE), permitting loading of DNA polymerase. After initiation quickly degrades to an ADP-DnaA complex that is not apt for DNA replication. Binds acidic phospholipids. This is Chromosomal replication initiator protein DnaA from Caulobacter sp. (strain K31).